The following is a 420-amino-acid chain: Transcription termination factor Rho (420 aa).

A Rho RNA-BD domain is found at 49-124 (DIFGGGVLEI…LKVDQVNDDK (76 aa)). ATP-binding positions include 170–175 (GKGQRG), 182–187 (KAGKTM), and arginine 213.

The protein belongs to the Rho family. As to quaternary structure, homohexamer. The homohexamer assembles into an open ring structure.

Its function is as follows. Facilitates transcription termination by a mechanism that involves Rho binding to the nascent RNA, activation of Rho's RNA-dependent ATPase activity, and release of the mRNA from the DNA template. The protein is Transcription termination factor Rho of Haemophilus influenzae (strain ATCC 51907 / DSM 11121 / KW20 / Rd).